A 237-amino-acid chain; its full sequence is MPAVALGVSVGWRSLSLWLLALLQLCSADLDVLSPGSGSDKFKVEGRAVVPGVRPQDWVNTARVLVDGEEHVGFLRTDGSFVVHDVPSGSYVVEVISPAHRFEPVRVDITSKGKMRARYVNHIKTSEVVRLPYPLQMKSSGPPSYFIKRETWGWTDFLMNPMVMMMVLPLLIFVLLPKVVNTSDPEMRREMEQSMNMLNTNPELPDVSEFMTRLFTSKSSSKSSGSGKAGKSVGKRR.

The first 28 residues, 1 to 28 (MPAVALGVSVGWRSLSLWLLALLQLCSA), serve as a signal peptide directing secretion. Over 29–156 (DLDVLSPGSG…IKRETWGWTD (128 aa)) the chain is Lumenal. Residues 157–177 (FLMNPMVMMMVLPLLIFVLLP) form a helical membrane-spanning segment. Residues 178–237 (KVVNTSDPEMRREMEQSMNMLNTNPELPDVSEFMTRLFTSKSSSKSSGSGKAGKSVGKRR) are Cytoplasmic-facing. The interval 216 to 237 (TSKSSSKSSGSGKAGKSVGKRR) is disordered. A compositionally biased stretch (low complexity) spans 217–237 (SKSSSKSSGSGKAGKSVGKRR).

Belongs to the EMC7 family. Component of the ER membrane protein complex (EMC).

The protein localises to the endoplasmic reticulum membrane. Part of the endoplasmic reticulum membrane protein complex (EMC) that enables the energy-independent insertion into endoplasmic reticulum membranes of newly synthesized membrane proteins. Preferentially accommodates proteins with transmembrane domains that are weakly hydrophobic or contain destabilizing features such as charged and aromatic residues. Involved in the cotranslational insertion of multi-pass membrane proteins in which stop-transfer membrane-anchor sequences become ER membrane spanning helices. It is also required for the post-translational insertion of tail-anchored/TA proteins in endoplasmic reticulum membranes. By mediating the proper cotranslational insertion of N-terminal transmembrane domains in an N-exo topology, with translocated N-terminus in the lumen of the ER, controls the topology of multi-pass membrane proteins like the G protein-coupled receptors. By regulating the insertion of various proteins in membranes, it is indirectly involved in many cellular processes. This chain is Endoplasmic reticulum membrane protein complex subunit 7 (emc7), found in Xenopus tropicalis (Western clawed frog).